Here is a 1475-residue protein sequence, read N- to C-terminus: Protein Shroom4 (1475 aa).

Residues Y10 to N92 form the PDZ domain. Disordered stretches follow at residues E151–L175 and C202–S321. The segment covering T249–S258 has biased composition (polar residues). The span at E294–G312 shows a compositional bias: basic and acidic residues. S412 is modified (phosphoserine). 4 disordered regions span residues S432–T523, H542–R577, N610–D644, and S658–S688. Residues Q471–L485 are compositionally biased toward basic and acidic residues. Positions S513–T523 are enriched in polar residues. Residues H542–G557 are compositionally biased toward basic and acidic residues. Residues R558 to R568 are compositionally biased toward gly residues. Composition is skewed to low complexity over residues P624 to S635 and S658 to S667. The residue at position 722 (S722) is a Phosphoserine. Composition is skewed to polar residues over residues A727–P738 and K775–K791. Disordered regions lie at residues A727–Q753 and E772–K791. S1010 carries the post-translational modification Phosphoserine. Disordered regions lie at residues S1022–P1041 and S1055–Q1185. Over residues F1090–N1099 the composition is skewed to pro residues. Residues Q1110–Q1125 show a composition bias toward low complexity. Acidic residues predominate over residues E1128–L1145. Over residues Y1149–S1168 the composition is skewed to polar residues. In terms of domain architecture, ASD2 spans F1190–H1469. Residues S1380 to L1470 are a coiled coil.

It belongs to the shroom family. Interacts directly with F-actin. Detected in most adult tissues examined. Expressed in brain, lung, heart, liver, kidney, muscle and ovary. Expressed throughout the brain, with high expression in the brain stem and cerebellum and weaker expression in the hypothalamus, the hippocampus and the olfactory bulb. Expressed in wide range of cell types during development, including vascular endothelium and the polarized epithelium of the neural tube and kidney.

Its subcellular location is the cytoplasm. The protein resides in the cytoskeleton. In terms of biological role, probable regulator of cytoskeletal architecture that plays an important role in development. May regulate cellular and cytoskeletal architecture by modulating the spatial distribution of myosin II. The sequence is that of Protein Shroom4 (Shroom4) from Mus musculus (Mouse).